The chain runs to 297 residues: tRNA (guanine-N(7)-)-methyltransferase (297 aa).

S-adenosyl-L-methionine is bound by residues G101, E124–I125, N171–T172, and C191. The active site involves D194. T270 to E272 contacts S-adenosyl-L-methionine.

It belongs to the class I-like SAM-binding methyltransferase superfamily. TrmB family. Forms a complex with trm82.

The protein localises to the nucleus. It catalyses the reaction guanosine(46) in tRNA + S-adenosyl-L-methionine = N(7)-methylguanosine(46) in tRNA + S-adenosyl-L-homocysteine. The protein operates within tRNA modification; N(7)-methylguanine-tRNA biosynthesis. In terms of biological role, catalyzes the formation of N(7)-methylguanine at position 46 (m7G46) in tRNA. The polypeptide is tRNA (guanine-N(7)-)-methyltransferase (trm8) (Aspergillus niger (strain ATCC MYA-4892 / CBS 513.88 / FGSC A1513)).